We begin with the raw amino-acid sequence, 274 residues long: Rhamnulose-1-phosphate aldolase (274 aa).

E117 is an active-site residue. Zn(2+)-binding residues include H141, H143, and H212.

Belongs to the aldolase class II family. RhaD subfamily. As to quaternary structure, homotetramer. It depends on Zn(2+) as a cofactor.

The protein localises to the cytoplasm. The catalysed reaction is L-rhamnulose 1-phosphate = (S)-lactaldehyde + dihydroxyacetone phosphate. Its pathway is carbohydrate degradation; L-rhamnose degradation; glycerone phosphate from L-rhamnose: step 3/3. Functionally, catalyzes the reversible cleavage of L-rhamnulose-1-phosphate to dihydroxyacetone phosphate (DHAP) and L-lactaldehyde. In Shigella dysenteriae serotype 1 (strain Sd197), this protein is Rhamnulose-1-phosphate aldolase.